The sequence spans 225 residues: Phosphoribosyltransferase domain-containing protein 1 (225 aa).

An N-acetylalanine modification is found at A2. Residues E141 and D142 each contribute to the Mg(2+) site. Residues 141–149 (EDVVGTGRT), K173, 194–195 (FV), and D201 contribute to the GMP site. D201 contacts Mg(2+).

The protein belongs to the purine/pyrimidine phosphoribosyltransferase family. Homodimer.

Has low, barely detectable phosphoribosyltransferase activity (in vitro). Binds GMP, IMP and alpha-D-5-phosphoribosyl 1-pyrophosphate (PRPP). Is not expected to contribute to purine metabolism or GMP salvage. The protein is Phosphoribosyltransferase domain-containing protein 1 (PRTFDC1) of Homo sapiens (Human).